The following is a 219-amino-acid chain: Auxin-responsive protein IAA24 (219 aa).

The short motif at 24-28 (LCLRL) is the EAR-like (transcriptional repression) element. 2 disordered regions span residues 24-88 (LCLR…AKAQ) and 109-128 (AAAA…QQGG). Positions 60–71 (STDSMASGTGTS) are enriched in polar residues. Residues 129–215 (GLYVKVSMDG…SCKKLRIMKG (87 aa)) form the PB1 domain.

Belongs to the Aux/IAA family. In terms of assembly, homodimers and heterodimers. As to expression, highly expressed in flowers. Expressed in seedlings.

It is found in the nucleus. Its function is as follows. Aux/IAA proteins are short-lived transcriptional factors that function as repressors of early auxin response genes at low auxin concentrations. The chain is Auxin-responsive protein IAA24 (IAA24) from Oryza sativa subsp. japonica (Rice).